The sequence spans 1692 residues: Flagellar attachment zone protein 1 (1692 aa).

3 coiled-coil regions span residues 613–657, 684–864, and 903–1607; these read REQE…KLQK, VTLD…HKVR, and NDHM…SALE. A run of 37 repeats spans residues 1012–1025, 1026–1039, 1040–1053, 1054–1067, 1068–1081, 1082–1095, 1096–1109, 1110–1123, 1124–1137, 1138–1151, 1152–1165, 1166–1179, 1180–1193, 1194–1207, 1208–1221, 1222–1235, 1236–1249, 1250–1263, 1264–1277, 1278–1291, 1292–1305, 1306–1319, 1320–1333, 1334–1347, 1348–1361, 1362–1375, 1376–1389, 1390–1403, 1404–1417, 1418–1431, 1432–1445, 1446–1459, 1460–1473, 1474–1487, 1488–1501, 1502–1515, and 1516–1529. The tract at residues 1012-1529 is 37 X 14 AA tandem repeats of E-E-L-E-L-K-[VA]-A-E-N-E-K-L-A; the sequence is EELELKAAEN…LKVAENKRLA (518 aa).

It is found in the cell projection. The protein localises to the cilium. The protein resides in the flagellum. A component of FAZ filament that is required for correct FAZ assembly and attachment. Not essential for new flagellum growth. The protein is Flagellar attachment zone protein 1 of Trypanosoma brucei brucei (strain 927/4 GUTat10.1).